The sequence spans 353 residues: Photosystem II protein D1 (353 aa).

The residue at position 2 (Thr-2) is an N-acetylthreonine. Thr-2 bears the Phosphothreonine mark. 3 consecutive transmembrane segments (helical) span residues 29–46, 118–133, and 142–156; these read YIGWFGVLMIPTLLTATS, HFLLGVACYMGREWEL, and WIAVAYSAPVAAAAA. Chlorophyll a is bound at residue His-118. Pheophytin a is bound at residue Tyr-126. Residues Asp-170 and Glu-189 each coordinate [CaMn4O5] cluster. The helical transmembrane segment at 197 to 218 threads the bilayer; that stretch reads FHMLGVAGVFGGSLFSAMHGSL. Chlorophyll a is bound at residue His-198. A quinone is bound by residues His-215 and 264-265; that span reads SF. His-215 is a Fe cation binding site. His-272 contacts Fe cation. A helical transmembrane segment spans residues 274 to 288; sequence FLAAWPVVGIWFTAL. [CaMn4O5] cluster contacts are provided by His-332, Glu-333, Asp-342, and Ala-344. Positions 345-353 are excised as a propeptide; sequence AVEAPSING.

This sequence belongs to the reaction center PufL/M/PsbA/D family. As to quaternary structure, PSII is composed of 1 copy each of membrane proteins PsbA, PsbB, PsbC, PsbD, PsbE, PsbF, PsbH, PsbI, PsbJ, PsbK, PsbL, PsbM, PsbT, PsbX, PsbY, PsbZ, Psb30/Ycf12, at least 3 peripheral proteins of the oxygen-evolving complex and a large number of cofactors. It forms dimeric complexes. Requires The D1/D2 heterodimer binds P680, chlorophylls that are the primary electron donor of PSII, and subsequent electron acceptors. It shares a non-heme iron and each subunit binds pheophytin, quinone, additional chlorophylls, carotenoids and lipids. D1 provides most of the ligands for the Mn4-Ca-O5 cluster of the oxygen-evolving complex (OEC). There is also a Cl(-1) ion associated with D1 and D2, which is required for oxygen evolution. The PSII complex binds additional chlorophylls, carotenoids and specific lipids. as cofactor. In terms of processing, tyr-161 forms a radical intermediate that is referred to as redox-active TyrZ, YZ or Y-Z. Post-translationally, C-terminally processed by CTPA; processing is essential to allow assembly of the oxygen-evolving complex and thus photosynthetic growth.

It is found in the plastid. It localises to the chloroplast thylakoid membrane. It catalyses the reaction 2 a plastoquinone + 4 hnu + 2 H2O = 2 a plastoquinol + O2. Photosystem II (PSII) is a light-driven water:plastoquinone oxidoreductase that uses light energy to abstract electrons from H(2)O, generating O(2) and a proton gradient subsequently used for ATP formation. It consists of a core antenna complex that captures photons, and an electron transfer chain that converts photonic excitation into a charge separation. The D1/D2 (PsbA/PsbD) reaction center heterodimer binds P680, the primary electron donor of PSII as well as several subsequent electron acceptors. This Vitis vinifera (Grape) protein is Photosystem II protein D1.